The sequence spans 58 residues: Small ribosomal subunit protein bS21 (58 aa).

The tract at residues 27–58 (GVLSEARKHEHYEKPSVKRKKKSEAARKRKFK) is disordered. A compositionally biased stretch (basic and acidic residues) spans 31 to 42 (EARKHEHYEKPS). Basic residues predominate over residues 43 to 58 (VKRKKKSEAARKRKFK).

The protein belongs to the bacterial ribosomal protein bS21 family.

The sequence is that of Small ribosomal subunit protein bS21 from Desulfitobacterium hafniense (strain DSM 10664 / DCB-2).